We begin with the raw amino-acid sequence, 253 residues long: Probable transcriptional regulatory protein SynRCC307_1833 (253 aa).

It belongs to the TACO1 family.

Its subcellular location is the cytoplasm. This chain is Probable transcriptional regulatory protein SynRCC307_1833, found in Synechococcus sp. (strain RCC307).